A 153-amino-acid polypeptide reads, in one-letter code: Large ribosomal subunit protein uL15 (153 aa).

Residues Arg21–Arg41 form a disordered region. A compositionally biased stretch (gly residues) spans Ile23–Ile35.

The protein belongs to the universal ribosomal protein uL15 family. Part of the 50S ribosomal subunit.

Its function is as follows. Binds to the 23S rRNA. This is Large ribosomal subunit protein uL15 from Rickettsia africae (strain ESF-5).